The sequence spans 359 residues: MMLNSSTEDGIKRIQDDCPKAGRHNYIFVMIPTLYSIIFVVGIFGNSLAVIVIYFYMKLKTVASVFLLNLALADLCFLLTLPLWAVYTAMEYRWPFGNYLCKIASASVSFNLYASVFLLTCLSIDRYLAIVHPMKSRLRRTMLVAKVTCIIIWLLAGLASLPAIIHRNVFFIENTNITVCAFHYESQNSTLPIGLGLTKNILGFLFPFLIILTSYTLIWKALKKAYEIQKNKPRNDDIFKIIMAIVLFFFFSWVPHQIFTFLDVLIQLGVIHDCRIADIVDTAMPITICIAYFNNCLNPLFYGFLGKKFKKYFLQLLKYIPPKAKSHSNLSTKMSTLSYRPSDNVSSSSKKPVPCFEVE.

The Extracellular portion of the chain corresponds to 1–25 (MMLNSSTEDGIKRIQDDCPKAGRHN). The N-linked (GlcNAc...) asparagine glycan is linked to asparagine 4. Residues glutamine 15 and aspartate 17 each contribute to the angiotensin II site. 2 disulfide bridges follow: cysteine 18/cysteine 274 and cysteine 101/cysteine 180. Residues 26–55 (YIFVMIPTLYSIIFVVGIFGNSLAVIVIYF) form a helical membrane-spanning segment. Topologically, residues 56-61 (YMKLKT) are cytoplasmic. The helical transmembrane segment at 62-89 (VASVFLLNLALADLCFLLTLPLWAVYTA) threads the bilayer. The Extracellular portion of the chain corresponds to 90–98 (MEYRWPFGN). Residues 99-125 (YLCKIASASVSFNLYASVFLLTCLSID) form a helical membrane-spanning segment. The Cytoplasmic segment spans residues 126-141 (RYLAIVHPMKSRLRRT). A helical transmembrane segment spans residues 142–165 (MLVAKVTCIIIWLLAGLASLPAII). Residues 166 to 190 (HRNVFFIENTNITVCAFHYESQNST) lie on the Extracellular side of the membrane. Arginine 167 contacts angiotensin II. An N-linked (GlcNAc...) asparagine glycan is attached at asparagine 176. Angiotensin II contacts are provided by phenylalanine 182, histidine 183, and tyrosine 184. Residue asparagine 188 is glycosylated (N-linked (GlcNAc...) asparagine). Residues 191-216 (LPIGLGLTKNILGFLFPFLIILTSYT) traverse the membrane as a helical segment. Angiotensin II is bound at residue lysine 199. Residues 217–239 (LIWKALKKAYEIQKNKPRNDDIF) are Cytoplasmic-facing. Residues 240–268 (KIIMAIVLFFFFSWVPHQIFTFLDVLIQL) form a helical membrane-spanning segment. Residues 269–278 (GVIHDCRIAD) are Extracellular-facing. The helical transmembrane segment at 279-304 (IVDTAMPITICIAYFNNCLNPLFYGF) threads the bilayer. The Cytoplasmic portion of the chain corresponds to 305–359 (LGKKFKKYFLQLLKYIPPKAKSHSNLSTKMSTLSYRPSDNVSSSSKKPVPCFEVE). Over residues 335–350 (STLSYRPSDNVSSSSK) the composition is skewed to polar residues. Residues 335-359 (STLSYRPSDNVSSSSKKPVPCFEVE) are disordered. Residue cysteine 355 is the site of S-palmitoyl cysteine attachment.

It belongs to the G-protein coupled receptor 1 family. In terms of assembly, interacts with MAS1. Interacts with ARRB1. Interacts with FLNA (via filamin repeat 21); increases PKA-mediated phosphorylation of FLNA. In terms of processing, C-terminal Ser or Thr residues may be phosphorylated.

The protein localises to the cell membrane. In terms of biological role, receptor for angiotensin II, a vasoconstricting peptide, which acts as a key regulator of blood pressure and sodium retention by the kidney. The activated receptor in turn couples to G-alpha proteins G(q) (GNAQ, GNA11, GNA14 or GNA15) and thus activates phospholipase C and increases the cytosolic Ca(2+) concentrations, which in turn triggers cellular responses such as stimulation of protein kinase C. This is Type-1 angiotensin II receptor (AGTR1) from Oryctolagus cuniculus (Rabbit).